The chain runs to 312 residues: MAQPELDLSKAPAHWGMNFTETTHQQPSRRIDPSNVTFPQGYTVVVIGAGKGIGEHIAKAYVQARAENIVITSRTGSDLDRVKKELETLAQQTGQAVKVSTLVQDATKPESYTKLKDLLEEGFNGRLDTLVFCAGGGPVGTLWTPHIDETDVDEWNESIALNFTGSYYAAKYLVPLMLRPQSHGKTIVNITSAASHFTGGNITPASYSIGKLALNRFTQILGENYADQGLVVVAVHPGSSPTPGALGSMPPSLHNILTDDQGLCGAVCVWISKEKRDWISGRYICATWDMDDLESKKEEIVKEDKLKWRMAV.

NADP(+) contacts are provided by Val-46, Ile-47, Lys-171, Tyr-207, Lys-211, and Thr-242. The active-site Proton donor is Tyr-207. Residue Lys-211 is the Lowers pKa of active site Tyr of the active site.

It belongs to the short-chain dehydrogenases/reductases (SDR) family.

It participates in pigment biosynthesis. Its pathway is secondary metabolite biosynthesis. Its function is as follows. Short chain dehydrogenase; part of the gene cluster that mediates the biosynthesis of pleosporalin A, ascomycone A, as well as a third cryptic naphthoquinone derived pigment, all responsible for the coloration of conidia. Essential for the production of pleosporalin A, but not the 2 other final products. The pathway begins with the biosynthesis of the cyclized heptaketide 3-acetonyl-1,6,8-trihydroxy-2-naphthaldehyde by the NR-PKS pgmA. The C-6 hydroxyl group is further methylated by the O-methyltransferase pgmB to yield fusarubinaldehyde which is in turn oxidized by the cytochrome P450 monooxygenase pgmC at C-9. The C-1 hydroxyl group is then methylated spontaneously. Although pgmE, pgmD and pgmH are essential for the production of pleosporalin A, it is not the case for the 2 other final products and it remains difficult to assign a specific function to each enzyme. PgmF and pgmG seem not to be involved in pigment biosynthesis although they were regulated by the cluster-specific transcription factor pgmR. The protein is Short chain dehydrogenase pgmD of Aspergillus terreus (strain NIH 2624 / FGSC A1156).